A 361-amino-acid polypeptide reads, in one-letter code: Putative agmatine deiminase (361 aa).

The Amidino-cysteine intermediate role is filled by C354.

This sequence belongs to the agmatine deiminase family.

The enzyme catalyses agmatine + H2O = N-carbamoylputrescine + NH4(+). The sequence is that of Putative agmatine deiminase from Streptococcus pneumoniae (strain Taiwan19F-14).